The primary structure comprises 503 residues: Phenylalanine--tRNA ligase alpha subunit (503 aa).

Ser2 carries the post-translational modification N-acetylserine. The segment at 2 to 173 (SDFQLEILKK…KRKLIAQGKI (172 aa)) is contains the major tRNA-Phe binding sites. Residues Thr333, 374–376 (QVE), and Tyr414 each bind L-phenylalanine. Glu416 is a Mg(2+) binding site. Residue Phe440 coordinates L-phenylalanine.

This sequence belongs to the class-II aminoacyl-tRNA synthetase family. Phe-tRNA synthetase alpha subunit type 2 subfamily. Tetramer of two alpha and two beta subunits. Mg(2+) serves as cofactor.

It is found in the cytoplasm. The enzyme catalyses tRNA(Phe) + L-phenylalanine + ATP = L-phenylalanyl-tRNA(Phe) + AMP + diphosphate + H(+). In Saccharomyces cerevisiae (strain ATCC 204508 / S288c) (Baker's yeast), this protein is Phenylalanine--tRNA ligase alpha subunit (FRS2).